The primary structure comprises 21 residues: Cutinase 2 (21 aa).

This sequence belongs to the cutinase family.

The protein localises to the secreted. The enzyme catalyses cutin + H2O = cutin monomers.. Inhibited by diisopropyl fluorophosphate (DFP). Its function is as follows. Catalyzes the hydrolysis of complex carboxylic polyesters found in the cell wall of plants. Degrades cutin, a macromolecule that forms the structure of the plant cuticle. Allows pathogenic fungi to penetrate through the cuticular barrier into the host plant during the initial stage of fungal infection. This Colletotrichum gloeosporioides (Anthracnose fungus) protein is Cutinase 2.